Reading from the N-terminus, the 29-residue chain is Cyclotide mobo-B (29 aa).

A cross-link (cyclopeptide (Gly-Asn)) is located at residues 1–29 (GKPICGETCAKGKCYTPKCTCNWPICYKN). 3 disulfides stabilise this stretch: C5–C19, C9–C21, and C14–C26.

The protein belongs to the cyclotide family. In terms of processing, this is a cyclic peptide.

Its function is as follows. Probably participates in a plant defense mechanism. This chain is Cyclotide mobo-B, found in Melicytus obovatus (Hymenanthera obovata).